A 228-amino-acid polypeptide reads, in one-letter code: Lipoprotein-releasing system ATP-binding protein LolD (228 aa).

One can recognise an ABC transporter domain in the interval 7 to 227 (LQLSGIERHY…TIEDGKVVEL (221 aa)). Residue 43-50 (APSGTGKS) participates in ATP binding.

This sequence belongs to the ABC transporter superfamily. Lipoprotein translocase (TC 3.A.1.125) family. As to quaternary structure, the complex is composed of two ATP-binding proteins (LolD) and two transmembrane proteins (LolC and LolE).

The protein localises to the cell inner membrane. In terms of biological role, part of the ABC transporter complex LolCDE involved in the translocation of mature outer membrane-directed lipoproteins, from the inner membrane to the periplasmic chaperone, LolA. Responsible for the formation of the LolA-lipoprotein complex in an ATP-dependent manner. This Rhizobium meliloti (strain 1021) (Ensifer meliloti) protein is Lipoprotein-releasing system ATP-binding protein LolD.